A 195-amino-acid chain; its full sequence is Probable nicotinate-nucleotide adenylyltransferase (195 aa).

Belongs to the NadD family.

The catalysed reaction is nicotinate beta-D-ribonucleotide + ATP + H(+) = deamido-NAD(+) + diphosphate. It functions in the pathway cofactor biosynthesis; NAD(+) biosynthesis; deamido-NAD(+) from nicotinate D-ribonucleotide: step 1/1. Functionally, catalyzes the reversible adenylation of nicotinate mononucleotide (NaMN) to nicotinic acid adenine dinucleotide (NaAD). In Salinibacter ruber (strain DSM 13855 / M31), this protein is Probable nicotinate-nucleotide adenylyltransferase.